Consider the following 102-residue polypeptide: Death-associated protein 1 (102 aa).

The disordered stretch occupies residues 1 to 102 (MSSPPEGKLE…RTQHIQQPRK (102 aa)). S2 carries the post-translational modification N-acetylserine. At S3 the chain carries Phosphoserine; by MTOR. Residue K29 is modified to N6-acetyllysine. The span at 32–43 (HTGDTKEEKDKD) shows a compositional bias: basic and acidic residues. A Phosphoserine modification is found at S49. Residue S51 is modified to Phosphoserine; by MTOR. S91 is modified (phosphoserine). Residues 92–102 (PRTQHIQQPRK) show a composition bias toward polar residues.

Belongs to the DAP-DAPL1 family. As to quaternary structure, associates with ribosomes; inhibiting translation. Interacts with eiF5a (EIF5A and EIF5A2); inhibiting translation. Phosphorylated. Phosphorylation by MTOR inhibits the suppressive activity of DAP toward autophagy.

In terms of biological role, ribosome-binding protein involved in ribosome hibernation, a process during which ribosomes are stabilized in an inactive state and preserved from proteasomal degradation. Acts via its association with eiF5a (EIF5A and EIF5A2) at the polypeptide exit tunnel of the ribosome, preventing mRNA translation. Involved in ribosome hibernation in the mature oocyte by preventing mRNA translation, leading to ribosome inactivation. Ribosomes, which are produced in large quantities during oogenesis, are stored and translationally repressed in the oocyte and early embryo. Also acts as a negative regulator of autophagy. Involved in mediating interferon-gamma-induced cell death. In Homo sapiens (Human), this protein is Death-associated protein 1.